The following is a 100-amino-acid chain: Urease subunit gamma (100 aa).

It belongs to the urease gamma subunit family. In terms of assembly, heterotrimer of UreA (gamma), UreB (beta) and UreC (alpha) subunits. Three heterotrimers associate to form the active enzyme.

It localises to the cytoplasm. It catalyses the reaction urea + 2 H2O + H(+) = hydrogencarbonate + 2 NH4(+). It participates in nitrogen metabolism; urea degradation; CO(2) and NH(3) from urea (urease route): step 1/1. Its function is as follows. Ureolysis may allow urea to be employed as a nitrogen source for growth and produces ammonia which may protect from killing at low pH. This chain is Urease subunit gamma, found in Streptococcus salivarius (strain 57.I).